Reading from the N-terminus, the 452-residue chain is Methionine aminopeptidase 2 (452 aa).

A disordered region spans residues 1 to 91; the sequence is MTGVTGTEDT…KNKKKKKKKI (91 aa). Residues 8 to 38 show a composition bias toward basic and acidic residues; it reads EDTKVIESKINELNIDKSKPEKTNKVNKSDD. Acidic residues predominate over residues 39 to 62; the sequence is VDNDDVDNDDNDDEDNDDDDDEIT. A compositionally biased stretch (basic residues) spans 74–91; it reads KKKKKNKNKNKKKKKKKI. Histidine 203 lines the substrate pocket. A divalent metal cation-binding residues include aspartate 223, aspartate 234, and histidine 305. Residue histidine 313 coordinates substrate. A divalent metal cation contacts are provided by glutamate 338 and glutamate 433.

This sequence belongs to the peptidase M24A family. Methionine aminopeptidase eukaryotic type 2 subfamily. Requires Co(2+) as cofactor. It depends on Zn(2+) as a cofactor. Mn(2+) serves as cofactor. Fe(2+) is required as a cofactor.

It is found in the cytoplasm. It catalyses the reaction Release of N-terminal amino acids, preferentially methionine, from peptides and arylamides.. In terms of biological role, cotranslationally removes the N-terminal methionine from nascent proteins. The N-terminal methionine is often cleaved when the second residue in the primary sequence is small and uncharged (Met-Ala-, Cys, Gly, Pro, Ser, Thr, or Val). The sequence is that of Methionine aminopeptidase 2 from Candida dubliniensis (strain CD36 / ATCC MYA-646 / CBS 7987 / NCPF 3949 / NRRL Y-17841) (Yeast).